Here is a 490-residue protein sequence, read N- to C-terminus: GTPase Der (490 aa).

EngA-type G domains lie at 1-165 and 227-400; these read MRIA…QIPV and LKVA…TIAT. Residues 7–14, 54–58, 117–120, 233–240, 280–284, and 345–348 each bind GTP; these read GRPNVGKS, DTGGV, NKAD, GHPNVGKS, DTAGL, and NKWD. The KH-like domain occupies 401–485; sequence TKLSTSLVNK…PFDLEYKAKP (85 aa).

It belongs to the TRAFAC class TrmE-Era-EngA-EngB-Septin-like GTPase superfamily. EngA (Der) GTPase family. Associates with the 50S ribosomal subunit.

Functionally, GTPase that plays an essential role in the late steps of ribosome biogenesis. This chain is GTPase Der, found in Chlamydia trachomatis serovar A (strain ATCC VR-571B / DSM 19440 / HAR-13).